The following is a 956-amino-acid chain: Glutamyl aminopeptidase (956 aa).

The Cytoplasmic segment spans residues 1 to 21; that stretch reads MILEERSSWEGSKRYCIKTKH. A helical; Signal-anchor for type II membrane protein membrane pass occupies residues 22 to 42; sequence VAIICAVVVAVGLIVGLSVGL. Residues 43–956 lie on the Extracellular side of the membrane; sequence TRSCDSTEGM…IRNWFLDLNG (914 aa). A disordered region spans residues 48–87; sequence STEGMTQGTTQGTTQAPSHLPPVTSPPEDQGVCPASEDES. The segment covering 49–62 has biased composition (low complexity); sequence TEGMTQGTTQGTTQ. 2 N-linked (GlcNAc...) asparagine glycosylation sites follow: Asn-126 and Asn-199. Glu-225 is a substrate binding site. An N-linked (GlcNAc...) asparagine glycan is attached at Asn-326. 359–363 contacts substrate; that stretch reads GAMEN. His-395 contacts Zn(2+). Residue Glu-396 is the Proton acceptor of the active site. Residues His-399 and Glu-418 each contribute to the Zn(2+) site. N-linked (GlcNAc...) asparagine glycans are attached at residues Asn-556, Asn-569, Asn-599, Asn-643, Asn-647, Asn-679, Asn-764, Asn-797, Asn-802, and Asn-829. Residue Arg-888 participates in substrate binding.

This sequence belongs to the peptidase M1 family. As to quaternary structure, homodimer; disulfide-linked. Zn(2+) is required as a cofactor.

The protein localises to the cell membrane. The enzyme catalyses Release of N-terminal glutamate (and to a lesser extent aspartate) from a peptide.. With respect to regulation, substrate specificity is modulated by calcium which enhances the enzymatic activity for cleavage of acidic residues while reducing its activity with basic residues. Inhibited by aminopeptidase inhibitors amastatin and bestatin. Regulates central hypertension through its calcium-modulated preference to cleave N-terminal acidic residues from peptides such as angiotensin II. The polypeptide is Glutamyl aminopeptidase (ENPEP) (Bos taurus (Bovine)).